The chain runs to 129 residues: Small ribosomal subunit protein uS12 (129 aa).

The residue at position 89 (Asp-89) is a 3-methylthioaspartic acid.

It belongs to the universal ribosomal protein uS12 family. In terms of assembly, part of the 30S ribosomal subunit. Contacts proteins S8 and S17. May interact with IF1 in the 30S initiation complex.

Functionally, with S4 and S5 plays an important role in translational accuracy. Interacts with and stabilizes bases of the 16S rRNA that are involved in tRNA selection in the A site and with the mRNA backbone. Located at the interface of the 30S and 50S subunits, it traverses the body of the 30S subunit contacting proteins on the other side and probably holding the rRNA structure together. The combined cluster of proteins S8, S12 and S17 appears to hold together the shoulder and platform of the 30S subunit. This Helicobacter hepaticus (strain ATCC 51449 / 3B1) protein is Small ribosomal subunit protein uS12.